A 472-amino-acid polypeptide reads, in one-letter code: UDP-glycosyltransferase 708G2 (472 aa).

The Proton acceptor role is filled by His23. His23 is a binding site for an anthocyanidin. Residue Asp117 is the Charge relay of the active site. Thr140 contacts UDP-alpha-D-glucose. A UDP region spans residues 283–284 (SR). Val346, Gln348, His363, Trp366, Asn367, Ser368, and Glu371 together coordinate UDP-alpha-D-glucose. Residue Gly386 coordinates an anthocyanidin. UDP-alpha-D-glucose contacts are provided by Asp387 and Gln388.

This sequence belongs to the UDP-glycosyltransferase family. Expressed at low levels in leaves, flowers and immature leaves.

It catalyses the reaction a 3'-hydro-2'-hydroxy-beta-oxodihydrochalcone + UDP-alpha-D-glucose = a 3'-(beta-D-glucopyranosyl)-2'-hydroxy-beta-oxodihydrochalcone + UDP + H(+). UDP-glucose-dependent glucosyltransferase catalyzing the C-glucosylation of 2-hydroxyflavanones (2-hydroxylnaringenin and 2-hydroxypinocembrin) and phloretin. No activity with flavanones, flavones or flavonols. Exhibits C-glucosylation activity toward 2-phenyl-2',4',6'-trihydroxyacetophenone. Can use UDP-xylose as sugar donor, but catalytic efficiency is much lower toward UDP-xylose than toward UDP-glucose. The sequence is that of UDP-glycosyltransferase 708G2 (UGT708G2) from Citrus unshiu (Satsuma mandarin).